Here is a 549-residue protein sequence, read N- to C-terminus: Oxygen-dependent choline dehydrogenase (549 aa).

4–33 (DFVIIGSGSAGSALAYRLSEDGKNSVLVIE) contributes to the FAD binding site. The active-site Proton acceptor is histidine 465.

It belongs to the GMC oxidoreductase family. It depends on FAD as a cofactor.

It carries out the reaction choline + A = betaine aldehyde + AH2. It catalyses the reaction betaine aldehyde + NAD(+) + H2O = glycine betaine + NADH + 2 H(+). It functions in the pathway amine and polyamine biosynthesis; betaine biosynthesis via choline pathway; betaine aldehyde from choline (cytochrome c reductase route): step 1/1. In terms of biological role, involved in the biosynthesis of the osmoprotectant glycine betaine. Catalyzes the oxidation of choline to betaine aldehyde and betaine aldehyde to glycine betaine at the same rate. The protein is Oxygen-dependent choline dehydrogenase of Rhizobium etli (strain CIAT 652).